Reading from the N-terminus, the 318-residue chain is O-glucosyltransferase LpsA (318 aa).

Belongs to the glycosyltransferase 90 family.

It participates in protein modification; protein glycosylation. Its function is as follows. Involved in lipopolysaccharide core biosynthesis. The protein is O-glucosyltransferase LpsA (lpsA) of Dichelobacter nodosus (Bacteroides nodosus).